A 565-amino-acid chain; its full sequence is Sulfite reductase [NADPH] hemoprotein beta-component (565 aa).

The [4Fe-4S] cluster site is built by cysteine 429, cysteine 435, cysteine 474, and cysteine 478. Position 478 (cysteine 478) interacts with siroheme.

It belongs to the nitrite and sulfite reductase 4Fe-4S domain family. Alpha(8)-beta(8). The alpha component is a flavoprotein, the beta component is a hemoprotein. Requires siroheme as cofactor. [4Fe-4S] cluster serves as cofactor.

It carries out the reaction hydrogen sulfide + 3 NADP(+) + 3 H2O = sulfite + 3 NADPH + 4 H(+). It participates in sulfur metabolism; hydrogen sulfide biosynthesis; hydrogen sulfide from sulfite (NADPH route): step 1/1. Component of the sulfite reductase complex that catalyzes the 6-electron reduction of sulfite to sulfide. This is one of several activities required for the biosynthesis of L-cysteine from sulfate. The polypeptide is Sulfite reductase [NADPH] hemoprotein beta-component (Shewanella pealeana (strain ATCC 700345 / ANG-SQ1)).